Reading from the N-terminus, the 249-residue chain is DNA polymerase sliding clamp 1 (249 aa).

Belongs to the PCNA family. As to quaternary structure, homotrimer. The subunits circularize to form a toroid; DNA passes through its center. Replication factor C (RFC) is required to load the toroid on the DNA. Interacts with TIP.

With respect to regulation, inhibited by interaction with the PCNA inhibitor TIP. Its function is as follows. Sliding clamp subunit that acts as a moving platform for DNA processing. Responsible for tethering the catalytic subunit of DNA polymerase and other proteins to DNA during high-speed replication. The protein is DNA polymerase sliding clamp 1 of Thermococcus kodakarensis (strain ATCC BAA-918 / JCM 12380 / KOD1) (Pyrococcus kodakaraensis (strain KOD1)).